Here is a 525-residue protein sequence, read N- to C-terminus: GMP synthase [glutamine-hydrolyzing] (525 aa).

In terms of domain architecture, Glutamine amidotransferase type-1 spans 9–207 (RILILDFGSQ…VMDICKCEKL (199 aa)). The Nucleophile role is filled by Cys-86. Active-site residues include His-181 and Glu-183. Positions 208-400 (WTAGAIIEDA…LGLPYDMLYR (193 aa)) constitute a GMPS ATP-PPase domain. 235-241 (SGGVDSS) serves as a coordination point for ATP.

In terms of assembly, homodimer.

The catalysed reaction is XMP + L-glutamine + ATP + H2O = GMP + L-glutamate + AMP + diphosphate + 2 H(+). The protein operates within purine metabolism; GMP biosynthesis; GMP from XMP (L-Gln route): step 1/1. In terms of biological role, catalyzes the synthesis of GMP from XMP. This is GMP synthase [glutamine-hydrolyzing] from Alteromonas mediterranea (strain DSM 17117 / CIP 110805 / LMG 28347 / Deep ecotype).